The sequence spans 363 residues: Apelin receptor B (363 aa).

Residues 1 to 38 (MESEGFSATTEQYEYYDYANETGLQPCDETDWDFSYSL) lie on the Extracellular side of the membrane. N-linked (GlcNAc...) asparagine glycosylation occurs at N20. 2 cysteine pairs are disulfide-bonded: C27-C287 and C109-C186. The chain crosses the membrane as a helical span at residues 39–59 (LPVFYMIVFVLGLSGNGVVIF). The Cytoplasmic segment spans residues 60 to 77 (TVWKAKPKRRSADTYIGN). A helical transmembrane segment spans residues 78–98 (LALADLAFVVTLPLWATYTAL). Residues 99-111 (GFHWPFGSALCKL) lie on the Extracellular side of the membrane. A helical transmembrane segment spans residues 112-132 (SSYLVLLNMFASVFCLTCLSF). The Cytoplasmic portion of the chain corresponds to 133 to 152 (DRYLAIVHSLSSAKLRSRSS). A helical transmembrane segment spans residues 153–173 (ILVSLAVIWLFSGLLALPSLI). The Extracellular segment spans residues 174–200 (LRDTRVEGNNTICDLDFSGVSSKENEN). N182 is a glycosylation site (N-linked (GlcNAc...) asparagine). Residues 201–221 (FWIGGLSILTTVPGFLLPLLL) traverse the membrane as a helical segment. Residues 222 to 249 (MTIFYCFIGGKVTMHFQNLKKEEQKKKR) are Cytoplasmic-facing. The chain crosses the membrane as a helical span at residues 250–270 (LLKIIITLVVVFAICWLPFHI). Over 271 to 297 (LKTIHFLDLMGFLELSCSAQNIIVSLH) the chain is Extracellular. The chain crosses the membrane as a helical span at residues 298–318 (PYATCLAYVNSCLNPFLYAFF). At 319–363 (DLRFRSQCFFFFGFKKVLQGHLSNTSSSLSAQTQKSEIHSLATKV) the chain is on the cytoplasmic side.

Belongs to the G-protein coupled receptor 1 family. Expressed in all blood vessels including the posterior cardinal vein, intersomitic veins and the vitelline vein network.

The protein resides in the cell membrane. G protein-coupled receptor for peptide hormones apelin (apln) and apelin receptor early endogenous ligand (apela), that plays a role in the regulation of normal cardiovascular function and fluid homeostasis. When acting as apelin receptor, activates both G(i) protein pathway that inhibits adenylate cyclase activity, and the beta-arrestin pathway that promotes internalization of the receptor. Also functions as mechanoreceptor that is activated by pathological stimuli in a G-protein-independent fashion to induce beta-arrestin signaling, hence eliciting cardiac hypertrophy. However, the presence of apelin ligand blunts cardiac hypertrophic induction from APLNR/APJ on response to pathological stimuli. Plays a key role in early development such as gastrulation, blood vessels formation and heart morphogenesis by acting as a receptor for apela hormone, promoting endoderm and mesendoderm cell migration and regulating the migration of cells fated to become myocardial progenitors, respectively. Promotes angioblast migration toward the embryonic midline, i.e. the position of the future vessel formation, during vasculogenesis. May promote sinus venosus (SV)-derived endothelial cells migration into the developing heart to promote coronary blood vessel development. Required for cardiovascular development, particularly for intersomitic vein angiogenesis by acting as a receptor for apln hormone. Also plays a role in various processes in adults such as regulation of blood vessel formation, blood pressure, heart contractility, and heart failure. Acts upstream of the i/o type of G-alpha proteins in the differentiation of endothelium, erythroid cells, myeloid cells and cardiomyocytes. This is Apelin receptor B (aplnr-b) from Xenopus laevis (African clawed frog).